We begin with the raw amino-acid sequence, 453 residues long: UPF0210 protein MM_0081 (453 aa).

The protein belongs to the UPF0210 family.

This Methanosarcina mazei (strain ATCC BAA-159 / DSM 3647 / Goe1 / Go1 / JCM 11833 / OCM 88) (Methanosarcina frisia) protein is UPF0210 protein MM_0081.